Here is a 464-residue protein sequence, read N- to C-terminus: Soluble pyridine nucleotide transhydrogenase (464 aa).

Position 35 to 44 (35 to 44 (DSRRVVGGNC)) interacts with FAD.

This sequence belongs to the class-I pyridine nucleotide-disulfide oxidoreductase family. The cofactor is FAD.

It localises to the cytoplasm. The enzyme catalyses NAD(+) + NADPH = NADH + NADP(+). Functionally, conversion of NADPH, generated by peripheral catabolic pathways, to NADH, which can enter the respiratory chain for energy generation. The polypeptide is Soluble pyridine nucleotide transhydrogenase (Pseudomonas paraeruginosa (strain DSM 24068 / PA7) (Pseudomonas aeruginosa (strain PA7))).